Consider the following 753-residue polypeptide: Rsm22-cox11 tandem protein 1, mitochondrial (753 aa).

A mitochondrion-targeting transit peptide spans 1–39 (MPILTCRYKILFLYNLRNCFTFQNQRCLIPYGTTTTIRW). 4 residues coordinate [4Fe-4S] cluster: C323, C329, C342, and C430. Residues 571–591 (IYYLVAISIFALGLTYAAVPL) form a helical membrane-spanning segment. Over 592–753 (YRLFCSKTGY…TNGNLLTKLN (162 aa)) the chain is Mitochondrial intermembrane.

The protein in the N-terminal section; belongs to the methyltransferase superfamily. Rsm22 family. In the C-terminal section; belongs to the COX11/CtaG family. As to quaternary structure, associates with the mitochondrial ribosome (mitoribosome). Only transiently interacts with the mitoribosome. Post-translationally, specific enzymatic cleavages in vivo by mitochondrial processing peptidase (MPP) yield mature proteins including rsm22-1 and cox11-1.

The protein localises to the mitochondrion. The protein resides in the mitochondrion inner membrane. Mitochondrial ribosome (mitoribosome) assembly factor. Binds at the interface of the head and body domains of the mitochondrial small ribosomal subunit (mt-SSU), occluding the mRNA channel and preventing compaction of the head domain towards the body. Probable inactive methyltransferase: retains the characteristic folding and ability to bind S-adenosyl-L-methionine, but it probably lost its methyltransferase activity. Functionally, exerts its effect at some terminal stage of cytochrome c oxidase synthesis, probably by being involved in the insertion of the copper B into subunit I. This chain is Rsm22-cox11 tandem protein 1, mitochondrial (cox1101), found in Schizosaccharomyces pombe (strain 972 / ATCC 24843) (Fission yeast).